The sequence spans 556 residues: Glucose-6-phosphate isomerase (556 aa).

Glu360 functions as the Proton donor in the catalytic mechanism. Residues His391 and Lys519 contribute to the active site.

This sequence belongs to the GPI family.

Its subcellular location is the cytoplasm. The enzyme catalyses alpha-D-glucose 6-phosphate = beta-D-fructose 6-phosphate. The protein operates within carbohydrate biosynthesis; gluconeogenesis. It participates in carbohydrate degradation; glycolysis; D-glyceraldehyde 3-phosphate and glycerone phosphate from D-glucose: step 2/4. Its function is as follows. Catalyzes the reversible isomerization of glucose-6-phosphate to fructose-6-phosphate. The sequence is that of Glucose-6-phosphate isomerase from Acinetobacter baumannii (strain AB0057).